Reading from the N-terminus, the 189-residue chain is Elongation factor P (189 aa).

This sequence belongs to the elongation factor P family.

Its subcellular location is the cytoplasm. It functions in the pathway protein biosynthesis; polypeptide chain elongation. In terms of biological role, involved in peptide bond synthesis. Stimulates efficient translation and peptide-bond synthesis on native or reconstituted 70S ribosomes in vitro. Probably functions indirectly by altering the affinity of the ribosome for aminoacyl-tRNA, thus increasing their reactivity as acceptors for peptidyl transferase. The chain is Elongation factor P from Pseudomonas savastanoi pv. phaseolicola (strain 1448A / Race 6) (Pseudomonas syringae pv. phaseolicola (strain 1448A / Race 6)).